Here is a 139-residue protein sequence, read N- to C-terminus: MRVKGGTVSRARRKKMVKLAKGYRGQRRINFKVAKQQVWKSYLYAYRDRKNTKRNFRKLWIARINAAARMNGLSYSKLMHGLTLAGVELNRKMLAEIAVTDFDTFAKLADQAKAALASDNVLVQERVAATLETTVKVDR.

The protein belongs to the bacterial ribosomal protein bL20 family.

Binds directly to 23S ribosomal RNA and is necessary for the in vitro assembly process of the 50S ribosomal subunit. It is not involved in the protein synthesizing functions of that subunit. The polypeptide is Large ribosomal subunit protein bL20 (Leuconostoc citreum (strain KM20)).